An 83-amino-acid chain; its full sequence is UPF0298 protein SERP0712 (83 aa).

It belongs to the UPF0298 family.

The protein resides in the cytoplasm. The polypeptide is UPF0298 protein SERP0712 (Staphylococcus epidermidis (strain ATCC 35984 / DSM 28319 / BCRC 17069 / CCUG 31568 / BM 3577 / RP62A)).